A 545-amino-acid polypeptide reads, in one-letter code: Pentatricopeptide repeat-containing protein At4g18840 (545 aa).

PPR repeat units follow at residues 104 to 138 (NGFT…PVFP), 139 to 173 (DKYS…GLVT), 174 to 204 (DVFV…MPVR), 205 to 239 (DAVS…NVES), 240 to 266 (WNFM…MPVR), 267 to 301 (DVVS…STEK), 303 to 337 (DGFT…GIEI), 338 to 368 (EGFL…TSKR), 369 to 403 (DVST…GFKP), 404 to 434 (NGIT…MSSV), and 440 to 474 (TIEH…EASI). The segment at 475–545 (LLESLLGACK…ERVNRSLDVA (71 aa)) is type E motif.

Belongs to the PPR family. PCMP-E subfamily.

The polypeptide is Pentatricopeptide repeat-containing protein At4g18840 (PCMP-E101) (Arabidopsis thaliana (Mouse-ear cress)).